The primary structure comprises 91 residues: uncharacterized protein (91 aa).

2 consecutive transmembrane segments (helical) span residues 22–42 and 53–73; these read WPVIAVGALAWLVAAVAAFVV and VAGLATGLLGTTIFVWQLAAA.

It is found in the cell membrane. This is an uncharacterized protein from Mycobacterium bovis (strain ATCC BAA-935 / AF2122/97).